A 218-amino-acid polypeptide reads, in one-letter code: Small ribosomal subunit protein uS5 (218 aa).

Residues Met-1 to His-49 form a disordered region. Basic and acidic residues predominate over residues Gly-26–His-49. Residues His-49–Val-112 form the S5 DRBM domain.

Belongs to the universal ribosomal protein uS5 family. In terms of assembly, part of the 30S ribosomal subunit. Contacts proteins S4 and S8.

In terms of biological role, with S4 and S12 plays an important role in translational accuracy. Located at the back of the 30S subunit body where it stabilizes the conformation of the head with respect to the body. The chain is Small ribosomal subunit protein uS5 from Rhodococcus jostii (strain RHA1).